The primary structure comprises 830 residues: C-Jun-amino-terminal kinase-interacting protein 2 (830 aa).

5 disordered regions span residues 1–26 (MADR…PPQD), 44–354 (CGLG…ADSP), 367–438 (EGSS…PGPC), 452–504 (LWAT…GSTA), and 539–574 (GNDS…PDSP). Over residues 77 to 105 (DFQEFEMIDDNEEEDDEEEEEEEEEEEDG) the composition is skewed to acidic residues. Positions 111–278 (AGGGPGSQAL…RMISSISETE (168 aa)) are JNK-binding domain (JBD). Positions 142–172 (LHLTTLGAQDSLNNNNGGFTSAPPSSWQETV) are enriched in polar residues. 2 stretches are compositionally biased toward low complexity: residues 176-190 (PAQE…PLLP) and 218-227 (ASSGGASPSS). Over residues 233–249 (ADLRSHSSGGHEGRRSS) the composition is skewed to basic and acidic residues. Positions 242–504 (GHEGRRSSQE…PGSRTTGSTA (263 aa)) are necessary for interaction with FGF13. Ser-257, Ser-304, and Ser-307 each carry phosphoserine. Over residues 271 to 307 (ISSISETELELSSDGGSSSGRSSHLTNSIEEASSPAS) the composition is skewed to low complexity. Acidic residues predominate over residues 333-352 (TNSEYESGSESEPDLSEDAD). The segment covering 427–437 (APRLGPAQPGP) has biased composition (low complexity). Acidic residues-rich tracts occupy residues 471 to 490 (SEEE…DAED) and 541 to 555 (DSEE…EEEA). Residues 610-671 (EREQTHRAVF…PAFYAHAVPG (62 aa)) form the SH3 domain. Positions 683–819 (PCWVDRFDVQ…FLEYYQEHLA (137 aa)) constitute a PID domain.

It belongs to the JIP scaffold family. In terms of assembly, forms homo- or heterooligomeric complexes. Binds specific components of the JNK signaling pathway namely JNK1, JNK2, JNK3, MAP2K7, MAP3K10, MAP3K11, MAP3K12 and MAPK13. Also binds the proline-rich domain-containing splice variant of apolipoprotein E receptor 2 (ApoER2). Binds the TPR motif-containing C-terminal of kinesin light chain. Binds the cytoplasmic tails of LRP1 and LRP2 (Megalin). Interacts with DCLK2. Interacts with FGF13; enables the interaction with MAPK13 and may regulate the MAPK8IP2 scaffolding activity. Interacts with TIAM1 and TIAM2. Interacts with SH3RF2. In terms of tissue distribution, highly expressed in brain. Expressed in all neurons. Also expressed in testis, primarily in the epididymal epidermis.

The protein localises to the cytoplasm. Functionally, the JNK-interacting protein (JIP) group of scaffold proteins selectively mediates JNK signaling by aggregating specific components of the MAPK cascade to form a functional JNK signaling module. JIP2 inhibits IL1 beta-induced apoptosis in insulin-secreting cells. This Mus musculus (Mouse) protein is C-Jun-amino-terminal kinase-interacting protein 2 (Mapk8ip2).